A 156-amino-acid chain; its full sequence is Probable cyclic pyranopterin monophosphate synthase (156 aa).

Substrate contacts are provided by residues 73–75 (LCH) and 109–110 (ME). Aspartate 124 is an active-site residue.

It belongs to the MoaC family. As to quaternary structure, homohexamer; trimer of dimers.

It catalyses the reaction (8S)-3',8-cyclo-7,8-dihydroguanosine 5'-triphosphate = cyclic pyranopterin phosphate + diphosphate. It functions in the pathway cofactor biosynthesis; molybdopterin biosynthesis. Its function is as follows. Catalyzes the conversion of (8S)-3',8-cyclo-7,8-dihydroguanosine 5'-triphosphate to cyclic pyranopterin monophosphate (cPMP). This chain is Probable cyclic pyranopterin monophosphate synthase, found in Pyrococcus furiosus (strain ATCC 43587 / DSM 3638 / JCM 8422 / Vc1).